The chain runs to 567 residues: uncharacterized protein (567 aa).

At 1-31 the chain is on the lumenal side; it reads MLDTILINVFRRDGDDDDDDGQDPALQELYS. A helical membrane pass occupies residues 32-52; it reads SWALFILLVLLIGALLTSYYV. Over 53 to 64 the chain is Cytoplasmic; it reads QSKKIRAIHETV. Residues 65 to 85 traverse the membrane as a helical segment; that stretch reads ISVFVGMVVGLIIRVSPGLII. The Lumenal segment spans residues 86-87; the sequence is QN. A helical transmembrane segment spans residues 88–108; sequence MVSFHSTYFFNVLLPPIILNS. Residues 109–128 are Cytoplasmic-facing; it reads GYELHQSNFFRNIGTILTFA. A helical transmembrane segment spans residues 129 to 149; it reads FAGTFISAVTLGVLVYIFSFL. At 150–159 the chain is on the lumenal side; sequence NFENLSMTFV. Residues 160 to 180 form a helical membrane-spanning segment; that stretch reads EALSMGATLSATDPVTVLAIF. Residues 181-188 are Cytoplasmic-facing; that stretch reads NSYKVDQK. Residues 189–209 form a helical membrane-spanning segment; it reads LYTIIFGESILNDAVAIVMFE. The Lumenal portion of the chain corresponds to 210–227; it reads TLQQFQGKTLHFFTLFSG. A helical transmembrane segment spans residues 228 to 248; sequence IGIFIITFFISLLIGVSIGLI. Topologically, residues 249–277 are cytoplasmic; it reads TALLLKYSYLRRYPSIESCIILLMAYTSY. A helical membrane pass occupies residues 278–298; it reads FFSNGCHMSGVVSLLFCGITL. The Lumenal segment spans residues 299-315; that stretch reads KHYAFFNMSYKAKLSTK. The helical transmembrane segment at 316-338 threads the bilayer; the sequence is YVFRVLAQLSENFIFIYLGMSLF. Residues 339 to 347 are Cytoplasmic-facing; sequence TQVDLVYKP. A helical membrane pass occupies residues 348–366; the sequence is IFILITTVAVTASRYMNVF. Topologically, residues 367–392 are lumenal; it reads PLSNLLNKFHRQRNGNLIDHIPYSYQ. A helical membrane pass occupies residues 393–413; sequence MMLFWAGLRGAVGVALAAGFE. Residues 414-424 lie on the Cytoplasmic side of the membrane; it reads GENAQTLRATT. Residues 425–445 traverse the membrane as a helical segment; that stretch reads LVVVVLTLIIFGGTTARMLEI. Topologically, residues 446–567 are lumenal; that stretch reads LHIETGVAAD…RDNLKNGTKK (122 aa). Ser-515 carries the phosphoserine modification.

This sequence belongs to the monovalent cation:proton antiporter 1 (CPA1) transporter (TC 2.A.36) family.

It is found in the golgi apparatus membrane. This is an uncharacterized protein from Schizosaccharomyces pombe (strain 972 / ATCC 24843) (Fission yeast).